Consider the following 219-residue polypeptide: 2-C-methyl-D-erythritol 4-phosphate cytidylyltransferase (219 aa).

The protein belongs to the IspD/TarI cytidylyltransferase family. IspD subfamily.

It catalyses the reaction 2-C-methyl-D-erythritol 4-phosphate + CTP + H(+) = 4-CDP-2-C-methyl-D-erythritol + diphosphate. The protein operates within isoprenoid biosynthesis; isopentenyl diphosphate biosynthesis via DXP pathway; isopentenyl diphosphate from 1-deoxy-D-xylulose 5-phosphate: step 2/6. Catalyzes the formation of 4-diphosphocytidyl-2-C-methyl-D-erythritol from CTP and 2-C-methyl-D-erythritol 4-phosphate (MEP). The chain is 2-C-methyl-D-erythritol 4-phosphate cytidylyltransferase from Chlamydia trachomatis serovar D (strain ATCC VR-885 / DSM 19411 / UW-3/Cx).